The sequence spans 190 residues: MRLRLLVSVGVLLVALLPSPPCRALLSRGPIPGARQASQHPQPLSFFQPPPQPQEPQALPTLLRVGEEYFLRLGNLDETRAAPLSPAASPLASRSSSRLSPDKVAANFFRALLQPRRPFDSPAGPAERGTENALGSRQEAPAARKRRSQEPPISLDLTFHLLREVLEMTKADQLAQQAHNNRKLLDIAGK.

A signal peptide spans 1 to 24; sequence MRLRLLVSVGVLLVALLPSPPCRA. A propeptide spanning residues 25-147 is cleaved from the precursor; sequence LLSRGPIPGA…QEAPAARKRR (123 aa). Disordered regions lie at residues 33–57 and 116–151; these read GARQASQHPQPLSFFQPPPQPQEPQ and RRPFDSPAGPAERGTENALGSRQEAPAARKRRSQEP. Ala-188 bears the Alanine amide mark.

Belongs to the sauvagine/corticotropin-releasing factor/urotensin I family. Interacts (via C-terminus) with CRFR1 (via N-terminal extracellular domain). Produced by the hypothalamus.

It localises to the secreted. Hormone regulating the release of corticotropin from pituitary gland. Induces NLRP6 in intestinal epithelial cells, hence may influence gut microbiota profile. The chain is Corticoliberin (CRH) from Bos taurus (Bovine).